A 258-amino-acid chain; its full sequence is Putative ankyrin repeat domain-containing protein 30B-like (258 aa).

Residues 1–21 (MERLSAAPVKGQTGPERPSPF) are disordered. ANK repeat units lie at residues 71-100 (KKRTALYWACANGHAEVVTLLVDRKCQLDV), 104-133 (ENRTILMKALQCQREACANILIDSGADPNI), 137-166 (YGNTAVHYAVNSENLSVVAKLLSCGADIEV), and 170-199 (AGHTPLLLAIRKRSEEIVEFLLTKNANANA). The interval 216–258 (KISKNSQNSNPEGTSEGTPDEAAPLAERTPDTAESLVERTPDE) is disordered. Polar residues predominate over residues 218-232 (SKNSQNSNPEGTSEG). Positions 243-258 (RTPDTAESLVERTPDE) are enriched in basic and acidic residues.

In Homo sapiens (Human), this protein is Putative ankyrin repeat domain-containing protein 30B-like (ANKRD30BL).